The chain runs to 102 residues: MDIKQTAVAGSLESSDLMITVSPNDEQTITITLDSSVEKQFGNHIRQLIHQTLVNLKVTAAKVEAVDKGALDCTIQARTIAAVHRAAGIDQYDWKEIDSWNV.

O-(phosphoribosyl dephospho-coenzyme A)serine is present on S14.

The protein belongs to the CitD family. In terms of assembly, oligomer with a subunit composition of (alpha,beta,gamma)6.

The protein localises to the cytoplasm. Covalent carrier of the coenzyme of citrate lyase. This Streptococcus pyogenes serotype M2 (strain MGAS10270) protein is Citrate lyase acyl carrier protein.